The chain runs to 1391 residues: MAERANLVFHNKVIDGTAIKRLISRLIDHFGMAYTSHILDQVKALGFQQATATSISLGIDDLLTIPSKGWLVQDAEQQSLILEKHHHFGNVHAVEKLRQSIEIWYATSEYLRQEMNPNFRMTDPFNPVHIMSFSGARGNASQVHQLVGMRGLMSDPQGQMIDLPIQSNLREGLSLTEYIISCYGARKGVVDTAVLTSDAGYLTRRLVEVVQHIVVRRTDCGTTRGISVSPQKRTLPERIFIQTLIGRVLADDIYMGPRCIAIRNQDIGLGLVDRFRAFRTQPISIRTPFTCRSTSWICRLCYGRSPTHGDLVELGEAVGIIAGQSIGEPGTQLTLRTFHTGGVFTGGTAEHVRAPFNGKIKFNEDLVHPTRTRHGHPAFLCYRDLYVIIESEDIIHKVTIPPKSFLLVQNDQYVESEQVIAEIRAGTYTLNLKERVRKHIYSDSEGEMHWSTDVYHSPEYTYSNVHLLPKTSHLWILSGGSYKFSVVPFSLHKDQDQINIHYLSAERRYISRFSVNNDQVRHNLFSSDFSDEKEERIYDYSELNRIIGTGHCDFIYSAILHENADLLAKRRRNRFIIPFQLIQDQEKELMLHSHSGISMEIPINGIFRRKGILAFFDDPRYRRKSSGITKYGTLGAHSIVKREDVIEYRGVKKVKPKYQMKVDRFFFIPEEVHILSESSSIMVRNNSIIGVDTPITLNTRSQVGGLVRVERKKKRIELKIFSGNIYFPGERDKISRHSGILIPPGTGKTNSKESKKLKNWIYVQRITPTKKKYFVLVRPVTPYEIPDGLNLATLFPQDPFQEKDNMQLRAVNYILYGNGKPTRRISDTSIQLVRTCLVLSWDQDNKSSFAEEVCASFVEVRTNGLIRDFLRIDLVKSHIFYIRKRNDPSGSELISDNRSDRTNKNPFYSIYSNARIQQSFSQNHGTIHTLLNRNKESQSLIILSASNCFRMGPFNDVKYHNVIKQSIKKDPLIPIKNLLGPLGTAPKIANFYSSFYPLITHNQTSVAKYFELDNLKQAFQVLNYYLIAENGRIYNFDPCRNIFLNAVNLNWYFPHHHYNYCEETSTIISLGQFICENVCIAKSGPRLKSGQVFIVQADSIVIRSAKPYLATPGATVHGHYGETLYEGDTLVTFIYEKSRSGDITQGLPKVEQVLEVRSIDSISMNLEKRIEGWNECITRILGIPWGFVIGAELTIVQSRLSLVNKIQKVYRSQGVQIHNRHIEIIVRQITSKVLVSEDGMSNVFLPGELIGLLRAERTGRALEEAICYRAVLLGITRASLNTQSFISEASFQETARVLAKAALRGRIDWLKGLKENVVLGGMIPAGTGFKGLVHRSRQHNNILLETKKKNFFGGEMRDIFFHHRELFDSCFSNNLHDTSGRSFIGIEFNDS.

4 residues coordinate Zn(2+): cysteine 220, cysteine 291, cysteine 298, and cysteine 301.

The protein belongs to the RNA polymerase beta' chain family. RpoC2 subfamily. In terms of assembly, in plastids the minimal PEP RNA polymerase catalytic core is composed of four subunits: alpha, beta, beta', and beta''. When a (nuclear-encoded) sigma factor is associated with the core the holoenzyme is formed, which can initiate transcription. The cofactor is Zn(2+).

The protein localises to the plastid. It localises to the chloroplast. It catalyses the reaction RNA(n) + a ribonucleoside 5'-triphosphate = RNA(n+1) + diphosphate. DNA-dependent RNA polymerase catalyzes the transcription of DNA into RNA using the four ribonucleoside triphosphates as substrates. The polypeptide is DNA-directed RNA polymerase subunit beta'' (Gossypium barbadense (Sea Island cotton)).